The chain runs to 459 residues: U1 small nuclear ribonucleoprotein 70 kDa (459 aa).

The region spanning 99–178 (KTIFVSRISY…RRIVVDIERG (80 aa)) is the RRM domain. The segment at 185-459 (KPRKFGGGLG…YSMISNENGF (275 aa)) is disordered. Basic and acidic residues predominate over residues 211–241 (EMSESREKEKEREKEKEKEKERMEKMKKRDG). The segment covering 242–254 (GLSSNGNRSNGIS) has biased composition (low complexity). The span at 263–408 (DRGDRGDRDR…IDERRRDQRD (146 aa)) shows a compositional bias: basic and acidic residues. Basic residues predominate over residues 426 to 440 (QHHHHQQNHQSHHNQ).

Its subcellular location is the nucleus. Functionally, mediates the splicing of pre-mRNA by binding to the stem loop I region of U1-snRNA. In Dictyostelium discoideum (Social amoeba), this protein is U1 small nuclear ribonucleoprotein 70 kDa (snrnp70).